Reading from the N-terminus, the 175-residue chain is Transcriptional regulator GadE (175 aa).

An HTH luxR-type domain is found at 109-174 (HKNSQLCFSH…DIVTLGITSY (66 aa)). Positions 133-152 (ESNITSTLNISQQTLKIQKF) form a DNA-binding region, H-T-H motif.

Its function is as follows. Regulates the expression of several genes involved in acid resistance. Required for the expression of gadA and gadBC, among others, regardless of media or growth conditions. Binds directly to the 20 bp GAD box found in the control regions of both loci. Could be involved in the regulation of the genes coding for the type III secretion system in enterohaemorragic strains. The protein is Transcriptional regulator GadE (gadE) of Escherichia coli O157:H7.